Here is a 131-residue protein sequence, read N- to C-terminus: Snaclec macrovipecetin subunit alpha (131 aa).

3 disulfides stabilise this stretch: cysteine 2/cysteine 13, cysteine 30/cysteine 125, and cysteine 100/cysteine 117. The C-type lectin domain occupies 9-126 (HEEHCYKVFR…CEDKNPFICK (118 aa)).

Heterodimer of subunits alpha and beta; disulfide-linked. As to expression, expressed by the venom gland.

Its subcellular location is the secreted. Functionally, interferes with one step of hemostasis (modulation of platelet aggregation, or coagulation cascade, for example). This Macrovipera lebetinus (Levantine viper) protein is Snaclec macrovipecetin subunit alpha.